Here is a 269-residue protein sequence, read N- to C-terminus: 2-heptyl-3-hydroxy-4(1H)-quinolone dioxygenase (269 aa).

Residue histidine 97 participates in substrate binding. Histidine 246 serves as the catalytic Proton donor/acceptor.

It belongs to the AB hydrolase superfamily. Monomer.

The enzyme catalyses 2-heptyl-3-hydroxy-4(1H)-quinolone + O2 = N-octanoylanthranilate + CO + H(+). Its function is as follows. Ring-cleaving dioxygenase involved in the degradation pathway of the Pseudomonas aeruginosa quorum sensing signal molecules HHQ (2-heptyl-4-quinolone) and PQS (2-heptyl-3-hydroxy-4(1H)-quinolone) to anthranilate. Catalyzes the cleavage of PQS to form N-octanoylanthranilate and carbon monoxide. Thus, leads to the inactivation of PQS that plays a central role in the regulation of virulence factor production by P.aeruginosa, thereby quenching the production of antimicrobials, which may contribute to the competitiveness of M.abscessus in presence of P.aeruginosa. In vitro, can also use other 2-alkyl-3-hydroxy-4(1H)-quinolone (AHQ) substrates with shorter alkyl substituents at C2, but with lower efficiency. The chain is 2-heptyl-3-hydroxy-4(1H)-quinolone dioxygenase from Mycobacteroides abscessus (strain ATCC 19977 / DSM 44196 / CCUG 20993 / CIP 104536 / JCM 13569 / NCTC 13031 / TMC 1543 / L948) (Mycobacterium abscessus).